A 499-amino-acid chain; its full sequence is Putative antiporter subunit mnhD2 (499 aa).

The next 14 membrane-spanning stretches (helical) occupy residues 1–21 (MSNL…ILVF), 31–51 (ILSI…LIYV), 77–97 (LSLL…AYGF), 107–127 (FHLP…FLTS), 129–149 (LFNL…LVTL), 160–180 (IVYV…IGML), 208–228 (ISLV…FMWL), 239–259 (LAAL…IRFF), 272–292 (TLLV…VIAY), 307–327 (IGFI…GAIF), 329–349 (LAND…LVYM), 367–387 (FFGV…PFSG), 402–422 (GNYI…YSLF), and 449–469 (GLLS…PVVL).

This sequence belongs to the CPA3 antiporters (TC 2.A.63) subunit D family. May form a heterooligomeric complex that consists of seven subunits: mnhA2, mnhB2, mnhC2, mnhD2, mnhE2, mnhF2 and mnhG2.

The protein resides in the cell membrane. The protein is Putative antiporter subunit mnhD2 (mnhD2) of Staphylococcus epidermidis (strain ATCC 35984 / DSM 28319 / BCRC 17069 / CCUG 31568 / BM 3577 / RP62A).